Here is a 261-residue protein sequence, read N- to C-terminus: MRIALGIEYDGNGYFGWQRQAEVDSVQAQLERALSIVANEPIGVFCAGRTDAGVHATGQVVHFETNAIRNEGAWTLGVNANLPDNIAVRWVKEVDDSFHARFSATARRYRYVIYNHSFRPGILRHGVSHYHGDIDADRMHQAAQALLGEQDFTSFRAVQCQSKTPFRNVHCVNVTRQGMYVIVDIAANAFLHHMVRNIVGSLLEIGLGNQPLTWMGDLLALKDRNQAAATAKPHGLYLVDVTYPEQYQLPKLALGPLFMLD.

D51 serves as the catalytic Nucleophile. Y109 contacts substrate.

The protein belongs to the tRNA pseudouridine synthase TruA family. As to quaternary structure, homodimer.

The catalysed reaction is uridine(38/39/40) in tRNA = pseudouridine(38/39/40) in tRNA. Formation of pseudouridine at positions 38, 39 and 40 in the anticodon stem and loop of transfer RNAs. In Shewanella baltica (strain OS195), this protein is tRNA pseudouridine synthase A.